The primary structure comprises 436 residues: ATP-dependent protease ATPase subunit HslU (436 aa).

ATP-binding positions include Ile-18, 60 to 65 (GVGKTE), Asp-249, Glu-314, and Arg-386.

Belongs to the ClpX chaperone family. HslU subfamily. As to quaternary structure, a double ring-shaped homohexamer of HslV is capped on each side by a ring-shaped HslU homohexamer. The assembly of the HslU/HslV complex is dependent on binding of ATP.

Its subcellular location is the cytoplasm. ATPase subunit of a proteasome-like degradation complex; this subunit has chaperone activity. The binding of ATP and its subsequent hydrolysis by HslU are essential for unfolding of protein substrates subsequently hydrolyzed by HslV. HslU recognizes the N-terminal part of its protein substrates and unfolds these before they are guided to HslV for hydrolysis. The protein is ATP-dependent protease ATPase subunit HslU of Ruegeria sp. (strain TM1040) (Silicibacter sp.).